Consider the following 234-residue polypeptide: Phosphoribosylaminoimidazole-succinocarboxamide synthase (234 aa).

Belongs to the SAICAR synthetase family.

It carries out the reaction 5-amino-1-(5-phospho-D-ribosyl)imidazole-4-carboxylate + L-aspartate + ATP = (2S)-2-[5-amino-1-(5-phospho-beta-D-ribosyl)imidazole-4-carboxamido]succinate + ADP + phosphate + 2 H(+). The protein operates within purine metabolism; IMP biosynthesis via de novo pathway; 5-amino-1-(5-phospho-D-ribosyl)imidazole-4-carboxamide from 5-amino-1-(5-phospho-D-ribosyl)imidazole-4-carboxylate: step 1/2. This chain is Phosphoribosylaminoimidazole-succinocarboxamide synthase, found in Clostridium botulinum (strain Okra / Type B1).